A 292-amino-acid polypeptide reads, in one-letter code: MAKKAKFFKNGIWYWLFIAPTLLSLIIVVLIPFIIGIYYSFTDWNGINQPVFIGLKNFMTLRDDAEFWNSIIFTAKFAVACIVIINVVGLSLAMLVTRKIFARNFMRTAFYLPNLIGGLILGFIWNFIFVDVFQTISDATHIGWLGGWLSTTNTGFWGLVIVTSWQMIGYVMVIYIAYIESIPTDLIEASKIDGANSWQQFRNVVFPLIAPAFTVSLFITLSNSFKLFDQNLSLTAGAPGNTTQMITLNIYQTAFSAQEMAVGQAKAVIMFLIIAVISVIQVYLTQKREVEM.

The next 6 helical transmembrane spans lie at 15 to 35, 77 to 97, 110 to 130, 156 to 176, 205 to 225, and 260 to 280; these read WLFIAPTLLSLIIVVLIPFII, FAVACIVIINVVGLSLAMLVT, FYLPNLIGGLILGFIWNFIFV, FWGLVIVTSWQMIGYVMVIYI, VFPLIAPAFTVSLFITLSNSF, and MAVGQAKAVIMFLIIAVISVI. The ABC transmembrane type-1 domain maps to 71–281; the sequence is IIFTAKFAVA…LIIAVISVIQ (211 aa).

This sequence belongs to the binding-protein-dependent transport system permease family. MalFG subfamily.

The protein resides in the cell membrane. In terms of biological role, probably part of a binding-protein-dependent transport system starch degradation products. Probably responsible for the translocation of the substrate across the membrane. The chain is Probable starch degradation products transport system permease protein AmyD (amyD) from Thermoanaerobacterium thermosulfurigenes (Clostridium thermosulfurogenes).